Consider the following 202-residue polypeptide: uncharacterized protein (202 aa).

The chain crosses the membrane as a helical span at residues 18 to 38; that stretch reads FLIFLIFLSVLGCGITISGCI.

It localises to the membrane. This is an uncharacterized protein from Methanocaldococcus jannaschii (strain ATCC 43067 / DSM 2661 / JAL-1 / JCM 10045 / NBRC 100440) (Methanococcus jannaschii).